Reading from the N-terminus, the 92-residue chain is Large ribosomal subunit protein eL31 (92 aa).

N-acetylserine is present on S2.

It belongs to the eukaryotic ribosomal protein eL31 family. Part of the 50S ribosomal subunit.

Binds to the 23S rRNA. Located at the polypeptide exit tunnel on the outside of the subunit. The polypeptide is Large ribosomal subunit protein eL31 (rpl31e) (Haloarcula marismortui (strain ATCC 43049 / DSM 3752 / JCM 8966 / VKM B-1809) (Halobacterium marismortui)).